Here is a 207-residue protein sequence, read N- to C-terminus: Octanoyltransferase (207 aa).

One can recognise a BPL/LPL catalytic domain in the interval 27-203; that stretch reads ADTEDELWVV…HLETQFTPKA (177 aa). Substrate is bound by residues 66–73, 133–135, and 146–148; these read RGGQITYH, SLG, and GLA. The active-site Acyl-thioester intermediate is the C164.

Belongs to the LipB family.

It localises to the cytoplasm. It catalyses the reaction octanoyl-[ACP] + L-lysyl-[protein] = N(6)-octanoyl-L-lysyl-[protein] + holo-[ACP] + H(+). Its pathway is protein modification; protein lipoylation via endogenous pathway; protein N(6)-(lipoyl)lysine from octanoyl-[acyl-carrier-protein]: step 1/2. Its function is as follows. Catalyzes the transfer of endogenously produced octanoic acid from octanoyl-acyl-carrier-protein onto the lipoyl domains of lipoate-dependent enzymes. Lipoyl-ACP can also act as a substrate although octanoyl-ACP is likely to be the physiological substrate. In Neisseria meningitidis serogroup B (strain ATCC BAA-335 / MC58), this protein is Octanoyltransferase.